Reading from the N-terminus, the 45-residue chain is Photosystem II reaction center protein K (45 aa).

The propeptide occupies 1–8 (MEAALLLA). Residues 24–44 (LPIIPLFFLALAFVWQAAVGF) form a helical membrane-spanning segment.

This sequence belongs to the PsbK family. As to quaternary structure, PSII is composed of 1 copy each of membrane proteins PsbA, PsbB, PsbC, PsbD, PsbE, PsbF, PsbH, PsbI, PsbJ, PsbK, PsbL, PsbM, PsbT, PsbX, PsbY, PsbZ, Psb30/Ycf12, peripheral proteins PsbO, CyanoQ (PsbQ), PsbU, PsbV and a large number of cofactors. It forms dimeric complexes.

It is found in the cellular thylakoid membrane. Its function is as follows. One of the components of the core complex of photosystem II (PSII). PSII is a light-driven water:plastoquinone oxidoreductase that uses light energy to abstract electrons from H(2)O, generating O(2) and a proton gradient subsequently used for ATP formation. It consists of a core antenna complex that captures photons, and an electron transfer chain that converts photonic excitation into a charge separation. The sequence is that of Photosystem II reaction center protein K from Rippkaea orientalis (strain PCC 8801 / RF-1) (Cyanothece sp. (strain PCC 8801)).